Consider the following 198-residue polypeptide: Holliday junction branch migration complex subunit RuvA (198 aa).

Residues 1–63 (MYDYIKGQLT…EDAHLLFGFH (63 aa)) form a domain I region. The tract at residues 64 to 142 (TKDEKDVFLK…EAPQETGNTK (79 aa)) is domain II. The tract at residues 143 to 147 (ARSNK) is flexible linker. The tract at residues 148–198 (AGNTQLDEAIEALLALGYKATELKKIRAFFEGTSETAEQYIKSALKLLMKG) is domain III.

This sequence belongs to the RuvA family. In terms of assembly, homotetramer. Forms an RuvA(8)-RuvB(12)-Holliday junction (HJ) complex. HJ DNA is sandwiched between 2 RuvA tetramers; dsDNA enters through RuvA and exits via RuvB. An RuvB hexamer assembles on each DNA strand where it exits the tetramer. Each RuvB hexamer is contacted by two RuvA subunits (via domain III) on 2 adjacent RuvB subunits; this complex drives branch migration. In the full resolvosome a probable DNA-RuvA(4)-RuvB(12)-RuvC(2) complex forms which resolves the HJ.

The protein resides in the cytoplasm. Functionally, the RuvA-RuvB-RuvC complex processes Holliday junction (HJ) DNA during genetic recombination and DNA repair, while the RuvA-RuvB complex plays an important role in the rescue of blocked DNA replication forks via replication fork reversal (RFR). RuvA specifically binds to HJ cruciform DNA, conferring on it an open structure. The RuvB hexamer acts as an ATP-dependent pump, pulling dsDNA into and through the RuvAB complex. HJ branch migration allows RuvC to scan DNA until it finds its consensus sequence, where it cleaves and resolves the cruciform DNA. This chain is Holliday junction branch migration complex subunit RuvA, found in Streptococcus pyogenes serotype M18 (strain MGAS8232).